An 871-amino-acid polypeptide reads, in one-letter code: Protein arg-6, mitochondrial (871 aa).

The N-terminal 44 residues, 1–44 (MYSACAVALRAGARRVVRRVPKSARALPRAAAARRQISTTAARS), are a transit peptide targeting the mitochondrion. One can recognise an N-acetyltransferase domain in the interval 336–488 (QASTSLSEFK…DFTENGRAML (153 aa)). Cys689 is an active-site residue.

In the N-terminal section; belongs to the acetylglutamate kinase family. The protein in the C-terminal section; belongs to the NAGSA dehydrogenase family. Post-translationally, the protein precursor is cleaved into the two biologically active enzymes, the kinase and the reductase.

It is found in the mitochondrion. It carries out the reaction N-acetyl-L-glutamate 5-semialdehyde + phosphate + NADP(+) = N-acetyl-L-glutamyl 5-phosphate + NADPH + H(+). It catalyses the reaction N-acetyl-L-glutamate + ATP = N-acetyl-L-glutamyl 5-phosphate + ADP. It functions in the pathway amino-acid biosynthesis; L-arginine biosynthesis; N(2)-acetyl-L-ornithine from L-glutamate: step 2/4. The protein operates within amino-acid biosynthesis; L-arginine biosynthesis; N(2)-acetyl-L-ornithine from L-glutamate: step 3/4. This chain is Protein arg-6, mitochondrial (arg-6), found in Neurospora crassa (strain ATCC 24698 / 74-OR23-1A / CBS 708.71 / DSM 1257 / FGSC 987).